A 293-amino-acid polypeptide reads, in one-letter code: Probable xyloglucan endotransglucosylase/hydrolase protein 5 (293 aa).

A signal peptide spans 1-21; it reads MGRLSSTLCLTFLILATVAFG. Residues 23-220 form the GH16 domain; sequence PPKKSINVPF…WEKAPFVASY (198 aa). The active-site Nucleophile is Glu-106. The Proton donor role is filled by Glu-110. Glu-110 lines the xyloglucan pocket. Residue Asn-114 is glycosylated (N-linked (GlcNAc...) asparagine). Xyloglucan-binding positions include 123–125, 133–135, 199–200, and Gly-204; these read QTN, NRE, and DW. Intrachain disulfides connect Cys-228/Cys-237 and Cys-274/Cys-287. Arg-279 contacts xyloglucan.

The protein belongs to the glycosyl hydrolase 16 family. XTH group 1 subfamily. Contains at least one intrachain disulfide bond essential for its enzymatic activity. As to expression, root specific.

Its subcellular location is the secreted. It localises to the cell wall. It is found in the extracellular space. The protein resides in the apoplast. It carries out the reaction breaks a beta-(1-&gt;4) bond in the backbone of a xyloglucan and transfers the xyloglucanyl segment on to O-4 of the non-reducing terminal glucose residue of an acceptor, which can be a xyloglucan or an oligosaccharide of xyloglucan.. Catalyzes xyloglucan endohydrolysis (XEH) and/or endotransglycosylation (XET). Cleaves and religates xyloglucan polymers, an essential constituent of the primary cell wall, and thereby participates in cell wall construction of growing tissues. This is Probable xyloglucan endotransglucosylase/hydrolase protein 5 (XTH5) from Arabidopsis thaliana (Mouse-ear cress).